We begin with the raw amino-acid sequence, 300 residues long: MKITVIGAGNVGSSVAYALILREIANEIVLVDINEDLLYAKELELTQSIAALNLNIDLLCTKDYTHTKNSDIVLFSAGFARKDGQSREELLQLNTSIMLDCAKKIKDFTEDPLFIILTNPVDFLLNTLYESGIFSSKKIIAMAGVLDNARFKYELAKKLNVKMSRVDTRLIGFHNDDMVLVKSYASVKNKNISEFLNEEEFEDLENEVKTGGAKVIKHLKTSAYLAPASACIRMLESIRSGEFLPMSVILHGEFGVQNKALGVMARLGLEGVIEIMKMDLSLQEKDKLEKSLIKYQYKGE.

Isoleucine 6–glycine 12 serves as a coordination point for NAD(+). Substrate is bound by residues arginine 81 and arginine 87. NAD(+)-binding positions include asparagine 94 and leucine 117 to asparagine 119. Positions 119 and 150 each coordinate substrate. Histidine 174 serves as the catalytic Proton acceptor.

This sequence belongs to the LDH/MDH superfamily.

The enzyme catalyses (S)-malate + NAD(+) = oxaloacetate + NADH + H(+). In terms of biological role, catalyzes the reversible oxidation of malate to oxaloacetate. The polypeptide is Probable malate dehydrogenase (mdh) (Campylobacter jejuni subsp. jejuni serotype O:2 (strain ATCC 700819 / NCTC 11168)).